The chain runs to 271 residues: Homeobox protein pal-1 (271 aa).

Disordered stretches follow at residues 1–25 (MSVD…TNVN), 100–135 (PPLS…ASSS), and 178–202 (GSAG…TNNV). Low complexity-rich tracts occupy residues 100-117 (PPLS…YPSP) and 125-135 (STSSGIGASSS). Over residues 189 to 202 (DTKSLPTGPGTNNV) the composition is skewed to polar residues. Residues 207-266 (ADKYRMVYSDYQRLELEKEFHTSAFITSDRKSQLSTMLSLTERQIKIWFQNRRAKDRRDK) constitute a DNA-binding region (homeobox).

It belongs to the Caudal homeobox family. In terms of assembly, interacts with tir-1 and let-756.

It localises to the nucleus. Its subcellular location is the chromosome. The protein localises to the centromere. It is found in the kinetochore. Transcriptional activator. Interacts with promoter regions for tbx-8.9, tbx-9, elt-1, hnd-1, scrt-1, and vab-7 genes. Binds the sequence ATTTATGAC. Binds to the enhancer region of the hlh-1 gene promoter during embryonic body wall muscle development. Activates the gene for mab-5 in embryo development. Necessary for vab-7 expression in C blastomeres in the posterior of embryos. Required for posterior V6 neuroectoblast cell fate specification during postembryonic neurogenesis (patterning) which generates the characteristic ray lineage during male tail development. Binds to ced-3 promoter and activated expression which is crucial for tail-spike cell death. Has a role in E cell specification in endoderm development and body wall muscle development. The polypeptide is Homeobox protein pal-1 (Caenorhabditis briggsae).